We begin with the raw amino-acid sequence, 880 residues long: Endoribonuclease YSH1 (880 aa).

His-83, His-85, Asp-87, His-88, His-174, and Asp-195 together coordinate Zn(2+). The active-site Proton donor is His-413. His-435 is a binding site for Zn(2+). Over residues 618-631 (HNHHHHHHHHHHHH) the composition is skewed to basic residues. Disordered stretches follow at residues 618-666 (HNHH…LPMH) and 729-783 (ESVP…SPPI). A compositionally biased stretch (acidic residues) spans 639–652 (ETDDDAEATTEDEE). A compositionally biased stretch (basic and acidic residues) spans 730–745 (SVPKVKVETEREAEKD).

The protein belongs to the metallo-beta-lactamase superfamily. RNA-metabolizing metallo-beta-lactamase-like family. CPSF2/YSH1 subfamily.

The protein resides in the nucleus. Component of the cleavage factor I (CF I) involved in pre-mRNA 3'-end processing. The sequence is that of Endoribonuclease YSH1 (YSH1) from Mycosarcoma maydis (Corn smut fungus).